The sequence spans 254 residues: Peroxisomal membrane protein 11-2 (254 aa).

The Cytoplasmic segment spans residues 1–113 (MVTAAGSPSS…YHPHPHVHPL (113 aa)). Residues 114-134 (LVLLAYGGQGVYNFLEQFAWL) form a helical membrane-spanning segment. At 135-227 (AKAGLLPARL…TVGDVTGRKG (93 aa)) the chain is on the lumenal side. A helical transmembrane segment spans residues 228–247 (LLGSSTLMASAGLLSALISV). Residues 248–254 (HKNWNSC) are Cytoplasmic-facing.

The protein belongs to the peroxin-11 family.

It localises to the peroxisome membrane. Functionally, involved in peroxisomal proliferation. The protein is Peroxisomal membrane protein 11-2 (PEX11-2) of Oryza sativa subsp. japonica (Rice).